A 393-amino-acid polypeptide reads, in one-letter code: MKAELIAVGTEILTGQIINTNAQFLSEKCAELGIDVYFHTAVGDNEGRLLSTLEVASKRSNMVVLCGGLGPTEDDLTKQTLATFLGRNLVFDELAMAKLDRFFASRPGRVRTPNNERQAQIVEGSQALQNPAGLAVGGMIEQDGVTYIVLPGPPSELKAMFSESLLPLLSQSQQQLYSRVLRFFGIGESQLVTVLADVIDKQTDPTLAPYAKVGEVTLRLSTKATSQEEANLRLNQLEEDILQHDKLADYFYAYGEDNSLVKTVATRLAEKRQTIAIVEQGTGGLLQAELSLALADQPYFSGGKVVGQLGIESGWLSEEADCIRQELQADLGLAVSVLIKPESTEDNVLAKVYLTLATPSGISQKEIDLGGYSWQYLRQLACLQAWDFVRNTL.

It belongs to the CinA family.

The polypeptide is Putative competence-damage inducible protein (Streptococcus suis (strain 98HAH33)).